We begin with the raw amino-acid sequence, 289 residues long: UPF0173 metal-dependent hydrolase H16_A2129 (289 aa).

It belongs to the UPF0173 family.

This Cupriavidus necator (strain ATCC 17699 / DSM 428 / KCTC 22496 / NCIMB 10442 / H16 / Stanier 337) (Ralstonia eutropha) protein is UPF0173 metal-dependent hydrolase H16_A2129.